The sequence spans 211 residues: uncharacterized protein (211 aa).

It belongs to the nucleoside deoxyribosyltransferase family.

The protein localises to the cytoplasm. Its subcellular location is the nucleus. This is an uncharacterized protein from Schizosaccharomyces pombe (strain 972 / ATCC 24843) (Fission yeast).